The sequence spans 522 residues: AAA ATPase forming ring-shaped complexes (522 aa).

Positions 1 to 26 (MGQEKHTDAASQSRDPEAVAAHENDQ) are disordered. The stretch at 20-57 (AAHENDQLRQRNHALAKALTRATEELRKAKAQLEQFMA) forms a coiled coil. 248–253 (GNGKTL) contributes to the ATP binding site.

This sequence belongs to the AAA ATPase family. Homohexamer. Assembles into a hexameric ring structure.

The protein is AAA ATPase forming ring-shaped complexes of Bifidobacterium animalis subsp. lactis (strain AD011).